Here is a 364-residue protein sequence, read N- to C-terminus: 3-dehydroquinate synthase (364 aa).

Residues 105–109 (GVVGD), 129–130 (TT), K142, and K151 contribute to the NAD(+) site. The Zn(2+) site is built by E184, H247, and H264.

This sequence belongs to the sugar phosphate cyclases superfamily. Dehydroquinate synthase family. Requires Co(2+) as cofactor. Zn(2+) is required as a cofactor. The cofactor is NAD(+).

It is found in the cytoplasm. The catalysed reaction is 7-phospho-2-dehydro-3-deoxy-D-arabino-heptonate = 3-dehydroquinate + phosphate. It participates in metabolic intermediate biosynthesis; chorismate biosynthesis; chorismate from D-erythrose 4-phosphate and phosphoenolpyruvate: step 2/7. Functionally, catalyzes the conversion of 3-deoxy-D-arabino-heptulosonate 7-phosphate (DAHP) to dehydroquinate (DHQ). This is 3-dehydroquinate synthase from Acidithiobacillus ferrooxidans (strain ATCC 23270 / DSM 14882 / CIP 104768 / NCIMB 8455) (Ferrobacillus ferrooxidans (strain ATCC 23270)).